The chain runs to 941 residues: Coiled-coil domain-containing protein 39 (941 aa).

Coiled-coil stretches lie at residues 16–122 (AIPV…ENGI), 164–273 (AQQD…ESEI), 306–605 (QLKG…EIKV), and 665–825 (IKAA…EEQD). Residues 868-941 (PTASTKGSRQ…SNVKSKKSSK (74 aa)) form a disordered region. Composition is skewed to low complexity over residues 871–903 (STKG…SQSS) and 914–934 (SSSL…SSNV). Residues Ser-892 and Ser-900 each carry the phosphoserine modification.

Belongs to the CCDC39 family. As to expression, mainly expressed in nasal brushings and, to a lesser extent, in lungs and testis.

It is found in the cytoplasm. It localises to the cytoskeleton. Its subcellular location is the cilium axoneme. Required for assembly of dynein regulatory complex (DRC) and inner dynein arm (IDA) complexes, which are responsible for ciliary beat regulation, thereby playing a central role in motility in cilia and flagella. Probably acts together with CCDC40 to form a molecular ruler that determines the 96 nanometer (nm) repeat length and arrangements of components in cilia and flagella. Not required for outer dynein arm complexes assembly. This chain is Coiled-coil domain-containing protein 39, found in Homo sapiens (Human).